The following is a 177-amino-acid chain: MSSPRERGKSLMESSGSEPPVTPSRYESQKRRDWNTFGQYLKNQRPPVPMSHCSCNHVLDFLRYLDQFGKTKVHVPGCMFYGQPEPPAPCTCPLRQAWGSLDALIGRLRAAYEENGGPPETNPFASGAIRVYLREVRECQAKARGIPYKKKKKKKPTPEMGGGREDSSSSSSSFSFS.

The segment covering 1–10 (MSSPRERGKS) has biased composition (basic and acidic residues). Disordered stretches follow at residues 1–31 (MSSP…SQKR) and 144–177 (RGIP…FSFS). The ALOG domain occupies 25 to 152 (RYESQKRRDW…ARGIPYKKKK (128 aa)). Residues 150–154 (KKKKK) carry the Nuclear localization signal motif. The span at 168-177 (SSSSSSFSFS) shows a compositional bias: low complexity.

This sequence belongs to the plant homeotic and developmental regulators ALOG protein family.

The protein localises to the nucleus. Functionally, probable transcription regulator that acts as a developmental regulator by promoting cell growth in response to light. This Arabidopsis thaliana (Mouse-ear cress) protein is Protein LIGHT-DEPENDENT SHORT HYPOCOTYLS 10 (LSH10).